An 843-amino-acid chain; its full sequence is Protein PLASTID MOVEMENT IMPAIRED 1 (843 aa).

The span at Pro-30–Glu-58 shows a compositional bias: polar residues. Disordered stretches follow at residues Pro-30–Glu-65 and Leu-88–Lys-116. The 154-residue stretch at Leu-131–Ile-284 folds into the C2 NT-type domain. 2 disordered regions span residues Phe-300–Gly-412 and Met-450–Gln-472. Residues Lys-307–Glu-336 are compositionally biased toward polar residues. A phosphoserine mark is found at Ser-314 and Ser-328. The segment covering Pro-365–Glu-381 has biased composition (basic and acidic residues). At Thr-404 the chain carries Phosphothreonine. At Ser-407 the chain carries Phosphoserine. Thr-410 carries the post-translational modification Phosphothreonine. A compositionally biased stretch (acidic residues) spans Asp-456–Gln-472. Residue Ser-507 is modified to Phosphoserine.

In terms of tissue distribution, expressed in leaves, stems, cauline leaves, and flowers but not in roots. Present in leaves in both mesophyll and pavement cells.

It localises to the cytoplasm. In terms of biological role, necessary for chloroplast and nuclear photorelocation movements via the regulation of chloroplast-actin (cp-actin) filaments in mesophyll cells, and together with PMIR1, in pavement cells. Required component for both the low- and high-light-dependent chloroplast movement responses via an abscisic acid (ABA) pathway. Involved in the ABA response pathway during seed germination. Modulates ABA accumulation during periods of water deficit at the seedling stage. The chain is Protein PLASTID MOVEMENT IMPAIRED 1 from Arabidopsis thaliana (Mouse-ear cress).